Reading from the N-terminus, the 105-residue chain is Large ribosomal subunit protein bL21 (105 aa).

Belongs to the bacterial ribosomal protein bL21 family. In terms of assembly, part of the 50S ribosomal subunit. Contacts protein L20.

This protein binds to 23S rRNA in the presence of protein L20. The polypeptide is Large ribosomal subunit protein bL21 (Rickettsia bellii (strain OSU 85-389)).